The sequence spans 381 residues: Subtilisin J (381 aa).

A signal peptide spans 1–29 (MRSKKLWISLLFALTLIFTMAFSNMSVQA). A propeptide spanning residues 30-106 (AGKSSTEKKY…VEEDHIAHEY (77 aa)) is cleaved from the precursor. In terms of domain architecture, Inhibitor I9 spans 38–103 (KYIVGFKQTM…VAYVEEDHIA (66 aa)). Gln108 serves as a coordination point for Ca(2+). In terms of domain architecture, Peptidase S8 spans 111–380 (PYGISQIKAP…KGLINVQAAA (270 aa)). Asp138 serves as the catalytic Charge relay system. Asp147 provides a ligand contact to Ca(2+). The active-site Charge relay system is the His170. Positions 181, 183, 185, 187, 275, 277, and 280 each coordinate Ca(2+). Ser327 acts as the Charge relay system in catalysis.

The protein belongs to the peptidase S8 family. Requires Ca(2+) as cofactor.

The protein resides in the secreted. It carries out the reaction Hydrolysis of proteins with broad specificity for peptide bonds, and a preference for a large uncharged residue in P1. Hydrolyzes peptide amides.. Its function is as follows. Subtilisin is an extracellular alkaline serine protease, it catalyzes the hydrolysis of proteins and peptide amides. The chain is Subtilisin J (aprJ) from Geobacillus stearothermophilus (Bacillus stearothermophilus).